A 294-amino-acid polypeptide reads, in one-letter code: Protoheme IX farnesyltransferase (294 aa).

The next 9 membrane-spanning stretches (helical) occupy residues 24-44 (VVLLMLLTVIVGMYLAAPGWV), 48-68 (LIAFTLLGIGLCAGSAAAINH), 96-116 (ALWFAVIIGLMGLSLLILFVN), 118-138 (LTALLTFVTLIGYAGVYTGYL), 146-166 (IVIGGLAGAAPPLLGWTAVTG), 172-192 (ALLLVLIIFTWTPPHFWALAI), 224-244 (VLLLVVSLLPFVVSMSGWIYL), 245-265 (LGALVLGIRFLVWAHKLYFTD), and 268-288 (VVAMQTFRFSILYLMLLFVFL).

This sequence belongs to the UbiA prenyltransferase family. Protoheme IX farnesyltransferase subfamily.

It is found in the cell inner membrane. The enzyme catalyses heme b + (2E,6E)-farnesyl diphosphate + H2O = Fe(II)-heme o + diphosphate. Its pathway is porphyrin-containing compound metabolism; heme O biosynthesis; heme O from protoheme: step 1/1. Converts heme B (protoheme IX) to heme O by substitution of the vinyl group on carbon 2 of heme B porphyrin ring with a hydroxyethyl farnesyl side group. In Legionella pneumophila (strain Paris), this protein is Protoheme IX farnesyltransferase.